We begin with the raw amino-acid sequence, 951 residues long: Metal transporter CNNM1 (951 aa).

Residues 23–43 (AVLLLFFSLSPRPPAAAAWLL) form a helical membrane-spanning segment. The tract at residues 116–135 (GGVAPSAVPTRPPGPQRCRE) is disordered. The CNNM transmembrane domain occupies 218-414 (LLPPAWLRAL…DPYSDLVKEE (197 aa)). 3 helical membrane passes run 222-242 (AWLRALGALLLLALSALFSGL), 282-302 (LLCTLLLGQAGANAALAGWLY), and 321-341 (IHFPWLPALVCTGAVFLGAEI). 2 consecutive CBS domains span residues 433–495 (LTPL…CTPL) and 502–568 (YNRP…ILDE). Polar residues-rich tracts occupy residues 731 to 740 (SRCSGLNRSE) and 814 to 824 (KAPTTRGTPQT). Disordered regions lie at residues 731–753 (SRCSGLNRSESPNRERSDFGGSN) and 795–830 (MDSSPQSPDMEAFTDGDSTKAPTTRGTPQTPKDDPA). Phosphothreonine occurs at positions 821 and 824. At serine 850 the chain carries Phosphoserine. The interval 920–951 (KLLRTLSGQKRKRSPEGERTSEDNSNLTPLIT) is disordered. The span at 942–951 (DNSNLTPLIT) shows a compositional bias: polar residues.

The protein belongs to the ACDP family. As to expression, restricted to brain and testis.

It is found in the cell membrane. In terms of biological role, probable metal transporter. This Homo sapiens (Human) protein is Metal transporter CNNM1 (CNNM1).